The chain runs to 124 residues: Glycine cleavage system H protein (124 aa).

The region spanning 24 to 106 (TYTMGITDHA…YDDGWLVKFK (83 aa)) is the Lipoyl-binding domain. Lysine 65 is modified (N6-lipoyllysine).

The protein belongs to the GcvH family. In terms of assembly, the glycine cleavage system is composed of four proteins: P, T, L and H. Requires (R)-lipoate as cofactor.

In terms of biological role, the glycine cleavage system catalyzes the degradation of glycine. The H protein shuttles the methylamine group of glycine from the P protein to the T protein. The chain is Glycine cleavage system H protein from Ruthia magnifica subsp. Calyptogena magnifica.